A 93-amino-acid chain; its full sequence is YcgL domain-containing protein VV1_0131 (93 aa).

In terms of domain architecture, YcgL spans 1–84; it reads MLCSIYKSSK…PPENLLQQHK (84 aa). Residues 72–93 are disordered; it reads LPPPPENLLQQHKERKAQQKND.

The polypeptide is YcgL domain-containing protein VV1_0131 (Vibrio vulnificus (strain CMCP6)).